The primary structure comprises 253 residues: Type III pantothenate kinase (253 aa).

6–13 is a binding site for ATP; that stretch reads DVGNTNIV. 107–110 serves as a coordination point for substrate; that stretch reads GADR. Asp109 serves as the catalytic Proton acceptor. A K(+)-binding site is contributed by Asp129. Thr132 serves as a coordination point for ATP. Thr184 serves as a coordination point for substrate.

It belongs to the type III pantothenate kinase family. In terms of assembly, homodimer. It depends on NH4(+) as a cofactor. The cofactor is K(+).

The protein resides in the cytoplasm. It carries out the reaction (R)-pantothenate + ATP = (R)-4'-phosphopantothenate + ADP + H(+). Its pathway is cofactor biosynthesis; coenzyme A biosynthesis; CoA from (R)-pantothenate: step 1/5. Its function is as follows. Catalyzes the phosphorylation of pantothenate (Pan), the first step in CoA biosynthesis. The protein is Type III pantothenate kinase of Exiguobacterium sibiricum (strain DSM 17290 / CCUG 55495 / CIP 109462 / JCM 13490 / 255-15).